A 578-amino-acid polypeptide reads, in one-letter code: 2-succinyl-5-enolpyruvyl-6-hydroxy-3-cyclohexene-1-carboxylate synthase (578 aa).

Residues 186 to 208 (LPAAGGEHHPAEPRSTPWDGPVP) are disordered.

The protein belongs to the TPP enzyme family. MenD subfamily. In terms of assembly, homodimer. It depends on Mg(2+) as a cofactor. Mn(2+) is required as a cofactor. The cofactor is thiamine diphosphate.

It catalyses the reaction isochorismate + 2-oxoglutarate + H(+) = 5-enolpyruvoyl-6-hydroxy-2-succinyl-cyclohex-3-ene-1-carboxylate + CO2. The protein operates within quinol/quinone metabolism; 1,4-dihydroxy-2-naphthoate biosynthesis; 1,4-dihydroxy-2-naphthoate from chorismate: step 2/7. It functions in the pathway cofactor biosynthesis; phylloquinone biosynthesis. Functionally, catalyzes the thiamine diphosphate-dependent decarboxylation of 2-oxoglutarate and the subsequent addition of the resulting succinic semialdehyde-thiamine pyrophosphate anion to isochorismate to yield 2-succinyl-5-enolpyruvyl-6-hydroxy-3-cyclohexene-1-carboxylate (SEPHCHC). The sequence is that of 2-succinyl-5-enolpyruvyl-6-hydroxy-3-cyclohexene-1-carboxylate synthase from Synechococcus sp. (strain WH7803).